The sequence spans 464 residues: Arginine biosynthesis bifunctional protein ArgJ, mitochondrial (464 aa).

The N-terminal 22 residues, 1–22, are a transit peptide targeting the mitochondrion; it reads MAASFKALPQQLTLTRSFARCY. Residues threonine 193, lysine 222, threonine 233, glutamate 320, asparagine 459, and threonine 464 each coordinate substrate. The active-site Nucleophile is the threonine 233.

This sequence belongs to the ArgJ family. As to quaternary structure, heterodimer of an alpha and a beta chain. The alpha and beta chains are autoproteolytically processed from a single precursor protein within the mitochondrion.

It localises to the mitochondrion matrix. The enzyme catalyses N(2)-acetyl-L-ornithine + L-glutamate = N-acetyl-L-glutamate + L-ornithine. The catalysed reaction is L-glutamate + acetyl-CoA = N-acetyl-L-glutamate + CoA + H(+). Its pathway is amino-acid biosynthesis; L-arginine biosynthesis; L-ornithine and N-acetyl-L-glutamate from L-glutamate and N(2)-acetyl-L-ornithine (cyclic): step 1/1. It participates in amino-acid biosynthesis; L-arginine biosynthesis; N(2)-acetyl-L-ornithine from L-glutamate: step 1/4. Functionally, catalyzes two activities which are involved in the cyclic version of arginine biosynthesis: the synthesis of acetylglutamate from glutamate and acetyl-CoA, and of ornithine by transacetylation between acetylornithine and glutamate. The protein is Arginine biosynthesis bifunctional protein ArgJ, mitochondrial of Verticillium alfalfae (strain VaMs.102 / ATCC MYA-4576 / FGSC 10136) (Verticillium wilt of alfalfa).